Consider the following 257-residue polypeptide: Neurotrophin-3 (257 aa).

An N-terminal signal peptide occupies residues 1-18 (MSILFYVIFLAYLRGIQG). Residues 19-138 (NNMDQRSLPE…VANRTSRRKR (120 aa)) constitute a propeptide that is removed on maturation. A disordered region spans residues 61-81 (STLPKAEAPREPERGGPAKSA). The span at 67–76 (EAPREPERGG) shows a compositional bias: basic and acidic residues. N-linked (GlcNAc...) asparagine glycosylation occurs at Asn131. Intrachain disulfides connect Cys152-Cys217, Cys195-Cys246, and Cys205-Cys248.

This sequence belongs to the NGF-beta family. Brain and peripheral tissues.

The protein resides in the secreted. Functionally, seems to promote the survival of visceral and proprioceptive sensory neurons. In Homo sapiens (Human), this protein is Neurotrophin-3 (NTF3).